A 916-amino-acid chain; its full sequence is MLWARGRQPDHRIRMSQQTTIRKLAELVNTPVDKLLVQLAEAGMKFSGPDQVVTSTEKMKLLGFLRRTHGKADTPAEAASEAAKKITLNRRKLQEVTVNAGRTKTTVNVEVRQKRTYVKSDNEGSGRAAPMTPDEERADILAKLAASRQRNLDEQQRLAESDRARDEAIQRKRDEEQAAKDRVEAERKAAEEAAAAASAPAPVAAAPAPSSAPAARAPSSPSSAPRPARPAGASPASRPATPARPDDRNNAAKHKTRGSHVMVAGVEDDDATKRFAGQLHLSAADRARRSNVRGKPTGRPGSSSSRRNDGGRGSNQSNSGPHGFERPTAPVVREVAIGETITVADLAQKLALKGGDVVKALFKMGVMATITQSIDHDTAALVTEELGHKAVRADNADFEDALLAHAEDAQGETTSRPPVVTIMGHVDHGKTSLLDYIRRTKIASGEAGGITQHIGAYHVETGRGVISFLDTPGHAAFTSMRARGAKITDIVVLVVAADDGVMPQTKEAVAHAKAAGVPLIVAVNKIDKAGADPLRVKNELLAENVVAEDFGGDTQFIEVSAKVGTGVDTLLDAISLQAEVLELKAVADGRASGTVIESSLDKGRGPVATVLVQQGALKRGDYLVCGIQYGRVRALFDETGHQPASAGPSIPVQVLGLSGVPEAGDDFVVVDDERLAKDVAQQRETKRRESRLVASATNRMEDILAQMGKGEGQQVLNLVIKADVQGSVEALKQSLVALSNDDIRINVIHSGVGGITESDANSAAASKATIIGFNVRADASARKIVESNGIDLRYFSIIYDVIDQVKQVASGLLGVEIREEIIGIAQVRDVFRSSKFGAVAGCMIIEGVVKRSKPIRVLRDSVVVFEGELESLRRFKENVDEVRNGTECGIGVKAYNDVKAGDQIECFERIEVARTL.

Positions 151-191 (NLDEQQRLAESDRARDEAIQRKRDEEQAAKDRVEAERKAAE) are enriched in basic and acidic residues. Disordered stretches follow at residues 151-262 (NLDE…SHVM) and 280-328 (HLSA…ERPT). Low complexity-rich tracts occupy residues 192–243 (EAAA…ATPA) and 293–305 (RGKP…SSSS). The tr-type G domain maps to 415 to 584 (SRPPVVTIMG…SLQAEVLELK (170 aa)). Residues 424–431 (GHVDHGKT) form a G1 region. 424 to 431 (GHVDHGKT) contacts GTP. The G2 stretch occupies residues 449–453 (GITQH). The segment at 470-473 (DTPG) is G3. Residues 470–474 (DTPGH) and 524–527 (NKID) contribute to the GTP site. A G4 region spans residues 524-527 (NKID). Positions 560–562 (SAK) are G5.

The protein belongs to the TRAFAC class translation factor GTPase superfamily. Classic translation factor GTPase family. IF-2 subfamily.

The protein localises to the cytoplasm. In terms of biological role, one of the essential components for the initiation of protein synthesis. Protects formylmethionyl-tRNA from spontaneous hydrolysis and promotes its binding to the 30S ribosomal subunits. Also involved in the hydrolysis of GTP during the formation of the 70S ribosomal complex. This is Translation initiation factor IF-2 from Xanthomonas campestris pv. campestris (strain B100).